Consider the following 270-residue polypeptide: A-type potassium channel modulatory protein KCNIP2 (270 aa).

The span at Met1 to Asp17 shows a compositional bias: basic and acidic residues. Residues Met1 to Lys33 form a disordered region. Residue Ser9 is modified to Phosphoserine. S-palmitoyl cysteine attachment occurs at residues Cys45 and Cys46. The EF-hand 1; degenerate domain maps to Phe81–Pro137. EF-hand domains lie at Asp140 to Gly175, Thr176 to Met211, and Ala224 to Ile259. Ca(2+) contacts are provided by Asp153, Asn155, Asp157, Ser159, Asp164, Asp189, Asn191, Asp193, Cys195, Glu200, Asp237, Asn239, Asp241, and Glu248. Residues Glu257 to Ile270 are interaction with KCND2.

It belongs to the recoverin family. Component of heteromultimeric potassium channels. Identified in potassium channel complexes containing KCND1, KCND2, KCND3, KCNIP1, KCNIP2, KCNIP3, KCNIP4, DPP6 and DPP10. The KCND2-KCNIP2 channel complex contains four KCND2 and four KCNIP2 subunits. Interacts with KCND2. Probably part of a complex consisting of KCNIP1, KCNIP2 isoform 3 and KCND2. At least isoform 2 and isoform 3 can self-associate to form homodimers and homotetramers. Isoform 3 interacts with KCNIP1 in a calcium-dependent manner. Interacts with KCND3; each KCNIP2 monomer interacts with two adjacent KCND3 subunits, through both the N-terminal inactivation ball of a KCND3 subunit and a C-terminal helix from the adjacent KCND3 subunit, clamping them together; this interaction modulates the channel gating kinetics. Post-translationally, palmitoylated. Palmitoylation enhances association with the plasma membrane. In terms of tissue distribution, expressed in heart ventricle with isoform 1 as most prominent form.

Its subcellular location is the cell membrane. Regulatory subunit of Kv4/D (Shal)-type voltage-gated rapidly inactivating A-type potassium channels. Modulates channel density, inactivation kinetics and rate of recovery from inactivation in a calcium-dependent and isoform-specific manner. Involved in KCND2 and KCND3 trafficking to the cell surface. May be required for the expression of I(To) currents in the heart. This Mustela putorius furo (European domestic ferret) protein is A-type potassium channel modulatory protein KCNIP2.